The primary structure comprises 264 residues: Apolipoprotein A-I (264 aa).

Positions 1-18 (MKAVVLALAVLFLTGSQA) are cleaved as a signal peptide. Tandem repeats lie at residues 67-88 (LHLL…EQLG) and 89-110 (PVTH…QEMN). Residues 67–264 (LHLLDNWDTL…DEASKKLNAQ (198 aa)) are 10 X approximate tandem repeats. Met-109 carries the post-translational modification Methionine sulfoxide. The stretch at 111–121 (KDLEEVKVKVQ) is one 3; half-length repeat. A run of 5 repeats spans residues 122-143 (PYLD…EKVG), 144-165 (PLGA…EKLT), 166-187 (PLGE…TQLA), 188-207 (PYSD…IRDS), and 208-229 (PSLA…EKAK). One copy of the 9; half-length repeat lies at 230-240 (PALEDLRQGLM). Repeat 10 spans residues 241-264 (PVLENLKTTVLAAIDEASKKLNAQ).

The protein belongs to the apolipoprotein A1/A4/E family. In terms of assembly, homodimer. Interacts with APOA1BP and CLU. Component of a sperm activating protein complex (SPAP), consisting of APOA1, an immunoglobulin heavy chain, an immunoglobulin light chain and albumin. Interacts with NDRG1. Interacts with SCGB3A2. Interacts with NAXE and YJEFN3. Glycosylated. Post-translationally, palmitoylated. In terms of processing, phosphorylation sites are present in the extracellular medium.

Its subcellular location is the secreted. Participates in the reverse transport of cholesterol from tissues to the liver for excretion by promoting cholesterol efflux from tissues and by acting as a cofactor for the lecithin cholesterol acyltransferase (LCAT). As part of the SPAP complex, activates spermatozoa motility. The chain is Apolipoprotein A-I (APOA1) from Jaculus jaculus (Lesser Egyptian jerboa).